The following is a 429-amino-acid chain: Histidine--tRNA ligase (429 aa).

Belongs to the class-II aminoacyl-tRNA synthetase family. In terms of assembly, homodimer.

It is found in the cytoplasm. It catalyses the reaction tRNA(His) + L-histidine + ATP = L-histidyl-tRNA(His) + AMP + diphosphate + H(+). The chain is Histidine--tRNA ligase from Pseudomonas paraeruginosa (strain DSM 24068 / PA7) (Pseudomonas aeruginosa (strain PA7)).